A 197-amino-acid chain; its full sequence is uncharacterized protein (197 aa).

Positions glutamine 168 to glycine 185 are enriched in basic and acidic residues. The tract at residues glutamine 168–asparagine 197 is disordered.

This is an uncharacterized protein from Escherichia coli (strain K12).